The primary structure comprises 580 residues: Microcin-J25 export ATP-binding/permease protein McjD (580 aa).

6 helical membrane-spanning segments follow: residues 25–45, 66–86, 143–163, 167–187, 261–281, and 286–306; these read FFSM…SPLI, VLLA…VFLF, VSQN…VVLS, WFSA…NTRL, AVIL…NGVV, and FIMI…IGAL. Residues 25–312 form the ABC transmembrane type-1 domain; sequence FFSMLFITSL…IGALLSEIRQ (288 aa). One can recognise an ABC transporter domain in the interval 345–578; the sequence is LSIRELSFSY…NEYISGLASV (234 aa). 378-385 contributes to the ATP binding site; that stretch reads GPSGSGKS.

This sequence belongs to the ABC transporter superfamily. As to quaternary structure, homodimer.

The protein localises to the cell inner membrane. Its function is as follows. Is able to protect a cell, which harbors the plasmid pTUC100 encoding microcin J25, against microcin J25. Is required for microcin J25 export out of the producing cells. This chain is Microcin-J25 export ATP-binding/permease protein McjD (mcjD), found in Escherichia coli.